A 619-amino-acid chain; its full sequence is Isocitrate dehydrogenase kinase/phosphatase (619 aa).

ATP-binding positions include 354 to 360 and Lys375; that span reads APGIRGM. The active site involves Asp409.

This sequence belongs to the AceK family.

Its subcellular location is the cytoplasm. The catalysed reaction is L-seryl-[isocitrate dehydrogenase] + ATP = O-phospho-L-seryl-[isocitrate dehydrogenase] + ADP + H(+). Its function is as follows. Bifunctional enzyme which can phosphorylate or dephosphorylate isocitrate dehydrogenase (IDH) on a specific serine residue. This is a regulatory mechanism which enables bacteria to bypass the Krebs cycle via the glyoxylate shunt in response to the source of carbon. When bacteria are grown on glucose, IDH is fully active and unphosphorylated, but when grown on acetate or ethanol, the activity of IDH declines drastically concomitant with its phosphorylation. This chain is Isocitrate dehydrogenase kinase/phosphatase, found in Bordetella bronchiseptica (strain ATCC BAA-588 / NCTC 13252 / RB50) (Alcaligenes bronchisepticus).